We begin with the raw amino-acid sequence, 156 residues long: Transcription elongation factor GreA (156 aa).

Residues 1–32 (MKKVRLTREGYEKLKKELEDLKRKFMYEISER) adopt a coiled-coil conformation.

Belongs to the GreA/GreB family.

In terms of biological role, necessary for efficient RNA polymerase transcription elongation past template-encoded arresting sites. The arresting sites in DNA have the property of trapping a certain fraction of elongating RNA polymerases that pass through, resulting in locked ternary complexes. Cleavage of the nascent transcript by cleavage factors such as GreA or GreB allows the resumption of elongation from the new 3'terminus. GreA releases sequences of 2 to 3 nucleotides. The chain is Transcription elongation factor GreA from Thermotoga petrophila (strain ATCC BAA-488 / DSM 13995 / JCM 10881 / RKU-1).